A 281-amino-acid chain; its full sequence is Lectin (281 aa).

An N-terminal signal peptide occupies residues 1–26 (MATYKLCSVLALSLTLFLLILNKVNS). N-linked (GlcNAc...) asparagine glycosylation is found at N43 and N139. The propeptide occupies 269 to 281 (AVIPTSNHNTFAI).

The protein belongs to the leguminous lectin family. As to quaternary structure, homodimer. In terms of processing, a minor C-terminal proteolytic processing site is observed at position 268.

Its function is as follows. Galactose and N-acetyllactosamine specific lectin. Binds to the H-2 blood type determinant fucosyl-N-acetyllactosamine. The sequence is that of Lectin from Erythrina corallodendron (Coral tree).